We begin with the raw amino-acid sequence, 361 residues long: Phosphoribosylformylglycinamidine cyclo-ligase (361 aa).

It belongs to the AIR synthase family.

The protein resides in the cytoplasm. It catalyses the reaction 2-formamido-N(1)-(5-O-phospho-beta-D-ribosyl)acetamidine + ATP = 5-amino-1-(5-phospho-beta-D-ribosyl)imidazole + ADP + phosphate + H(+). It participates in purine metabolism; IMP biosynthesis via de novo pathway; 5-amino-1-(5-phospho-D-ribosyl)imidazole from N(2)-formyl-N(1)-(5-phospho-D-ribosyl)glycinamide: step 2/2. This is Phosphoribosylformylglycinamidine cyclo-ligase from Bartonella henselae (strain ATCC 49882 / DSM 28221 / CCUG 30454 / Houston 1) (Rochalimaea henselae).